The chain runs to 124 residues: Small ribosomal subunit protein uS13 (124 aa).

The tract at residues 99–124 is disordered; the sequence is PCRGQKTKTNARTCKGPKKTVANKKK. Residues 113–124 are compositionally biased toward basic residues; that stretch reads KGPKKTVANKKK.

Belongs to the universal ribosomal protein uS13 family. In terms of assembly, part of the 30S ribosomal subunit. Forms a loose heterodimer with protein S19. Forms two bridges to the 50S subunit in the 70S ribosome.

Functionally, located at the top of the head of the 30S subunit, it contacts several helices of the 16S rRNA. In the 70S ribosome it contacts the 23S rRNA (bridge B1a) and protein L5 of the 50S subunit (bridge B1b), connecting the 2 subunits; these bridges are implicated in subunit movement. Contacts the tRNAs in the A and P-sites. The sequence is that of Small ribosomal subunit protein uS13 from Lachnospira eligens (strain ATCC 27750 / DSM 3376 / VPI C15-48 / C15-B4) (Eubacterium eligens).